The following is a 530-amino-acid chain: AAA-ATPase At3g28510 (530 aa).

A helical membrane pass occupies residues 5-25; it reads GAIWGITGTTVTSFMFFWAIY. An ATP-binding site is contributed by 250 to 257; the sequence is GPPGTGKS. Disordered stretches follow at residues 312-339 and 463-530; these read QRKKKKEEDEEEDGEEKKEGEKKPKVDD and KARK…KSDS. 2 stretches are compositionally biased toward basic and acidic residues: residues 326–339 and 463–511; these read EEKKEGEKKPKVDD and KARK…KEEN. Residues 512-523 are compositionally biased toward polar residues; sequence GNVSQQNGNSID.

The protein belongs to the AAA ATPase family. BCS1 subfamily. It depends on Mg(2+) as a cofactor.

It localises to the membrane. The enzyme catalyses ATP + H2O = ADP + phosphate + H(+). This chain is AAA-ATPase At3g28510, found in Arabidopsis thaliana (Mouse-ear cress).